The following is a 388-amino-acid chain: Protein RecA (388 aa).

79 to 86 (GPESSGKT) contacts ATP. Residues 347–388 (IDGEEVSEQDTENKKDEPKKEEAVNEEVPLDLGDELEIEIEE) form a disordered region. Basic and acidic residues predominate over residues 357–369 (TENKKDEPKKEEA). Positions 370–388 (VNEEVPLDLGDELEIEIEE) are enriched in acidic residues.

The protein belongs to the RecA family.

The protein localises to the cytoplasm. Functionally, can catalyze the hydrolysis of ATP in the presence of single-stranded DNA, the ATP-dependent uptake of single-stranded DNA by duplex DNA, and the ATP-dependent hybridization of homologous single-stranded DNAs. It interacts with LexA causing its activation and leading to its autocatalytic cleavage. The sequence is that of Protein RecA from Streptococcus pneumoniae (strain Hungary19A-6).